The primary structure comprises 282 residues: MGTRAQQIPLLEGETDNYDGVTVTMVEPMDSEVFTESLRASLSHWREEGKKGIWIKLPLGLANLVEAAVSEGFRYHHAEPEYLMLVSWISETPDTIPANASHVVGAGALVINKNTKEVLVVQERSGFFKDKNVWKLPTGVINEGEDIWTGVAREVEEETGIIADFVEVLAFRQSHKAILKKKTDMFFLCVLSPRSYDITEQKSEILQAKWMPIQEYVDQPWNKKNEMFKFMANICQKKCEEEYLGFAIVPTTTSSGKESFIYCNADHAKRLKVSRDQASASL.

The Nudix hydrolase domain occupies 101-233; it reads SHVVGAGALV…KNEMFKFMAN (133 aa). Residues 139–160 carry the Nudix box motif; that stretch reads GVINEGEDIWTGVAREVEEETG. Positions 154 and 158 each coordinate Mg(2+).

This sequence belongs to the Nudix hydrolase family. As to quaternary structure, homodimer. Interacts with RACK1A, GG1 and GG2. Requires Mg(2+) as cofactor. In terms of tissue distribution, expressed in stems, leaves, roots, flowers and siliques.

It localises to the nucleus. Its subcellular location is the cytoplasm. The protein localises to the cell membrane. The catalysed reaction is ADP-D-ribose + H2O = D-ribose 5-phosphate + AMP + 2 H(+). It carries out the reaction NAD(+) + H2O = beta-nicotinamide D-ribonucleotide + AMP + 2 H(+). The enzyme catalyses NADH + H2O = reduced beta-nicotinamide D-ribonucleotide + AMP + 2 H(+). With respect to regulation, not inhibited by fluoride. Functionally, mediates the hydrolysis of some nucleoside diphosphate derivatives. Can use both NADH and ADP-ribose as substrates, but not 8-oxo-dGTP, cyclic ADP-ribose, GDP-mannose, UDP-glucose, ATP, or GTP. Exerts negative control of EDS1 signaling. The protein is Nudix hydrolase 7 (NUDT7) of Arabidopsis thaliana (Mouse-ear cress).